Consider the following 787-residue polypeptide: Transcription factor SOX-6 (787 aa).

Residues 1–46 (MSSKQATSPFACAADGEDAMTQDLTSREKEEGSDQHVASHLPLHPI) are disordered. Basic and acidic residues predominate over residues 25 to 34 (TSREKEEGSD). Position 119 is a phosphothreonine (threonine 119). Residues 184 to 262 (LAEKERQLST…LLQQQIQVQG (79 aa)) adopt a coiled-coil conformation. Residues 340-429 (PGAKMPSTPQ…KSSIPSPIGG (90 aa)) are disordered. Residues 352-361 (NTAGTVSPTG) are compositionally biased toward polar residues. Serine 358 is modified (phosphoserine). Threonine 360 carries the post-translational modification Phosphothreonine. Residues lysine 363 and lysine 376 each participate in a glycyl lysine isopeptide (Lys-Gly) (interchain with G-Cter in SUMO) cross-link. Phosphoserine is present on residues serine 398 and serine 401. A compositionally biased stretch (polar residues) spans 398–420 (SPTSPTQNLFPASKTSPVNLPNK). The HMG box DNA-binding region spans 580 to 648 (IKRPMNAFMV…IHLEKYPNYK (69 aa)). Positions 712 to 740 (TPSPQMTSDCSSTSASPEPSLPVIQSTYG) are enriched in polar residues. Positions 712–787 (TPSPQMTSDC…NEAPEAVSAN (76 aa)) are disordered. A compositionally biased stretch (acidic residues) spans 755-768 (NGEDEMEMYDDYED).

In terms of assembly, homodimer. Interacts with DAZAP2. May interact with CENPK. Post-translationally, sumoylation inhibits the transcriptional activity.

It is found in the nucleus. The protein resides in the cytoplasm. In terms of biological role, transcription factor that plays a key role in several developmental processes, including neurogenesis, chondrocytes differentiation and cartilage formation. Specifically binds the 5'-AACAAT-3' DNA motif present in enhancers and super-enhancers and promotes expression of genes important for chondrogenesis. Required for overt chondrogenesis when condensed prechondrocytes differentiate into early stage chondrocytes: SOX5 and SOX6 cooperatively bind with SOX9 on active enhancers and super-enhancers associated with cartilage-specific genes, and thereby potentiate SOX9's ability to transactivate. Not involved in precartilaginous condensation, the first step in chondrogenesis, during which skeletal progenitors differentiate into prechondrocytes. Together with SOX5, required to form and maintain a pool of highly proliferating chondroblasts between epiphyses and metaphyses, to form columnar chondroblasts, delay chondrocyte prehypertrophy but promote hypertrophy, and to delay terminal differentiation of chondrocytes on contact with ossification fronts. Binds to the proximal promoter region of the myelin protein MPZ gene, and is thereby involved in the differentiation of oligodendroglia in the developing spinal tube. Binds to the gene promoter of MBP and acts as a transcriptional repressor. This is Transcription factor SOX-6 from Pongo abelii (Sumatran orangutan).